A 428-amino-acid chain; its full sequence is Tubby-like F-box protein 5 (428 aa).

The interval 17-65 (IGSMSRRAADGRAGGGRGGSRHSWPVLWSEQQQPPQQQQLQRQEHQQQQ) is disordered. The segment covering 47-65 (QQQPPQQQQLQRQEHQQQQ) has biased composition (low complexity). The F-box domain maps to 65-117 (QGRWANLPPELLLDVIQRVEASEATWPARRQVVACAAVCRSWREVTKEVVKTL).

Belongs to the TUB family. Ubiquitous.

This chain is Tubby-like F-box protein 5 (TULP5), found in Oryza sativa subsp. japonica (Rice).